The primary structure comprises 667 residues: Threonine--tRNA ligase (667 aa).

The region spanning 3–64 (DMIRVTLPDG…EEDTNLALVT (62 aa)) is the TGS domain. The segment at 252-561 (DHRRLGQEMD…LIEHFVGRFP (310 aa)) is catalytic. Zn(2+)-binding residues include Cys357, His408, and His538.

The protein belongs to the class-II aminoacyl-tRNA synthetase family. Homodimer. It depends on Zn(2+) as a cofactor.

It is found in the cytoplasm. The enzyme catalyses tRNA(Thr) + L-threonine + ATP = L-threonyl-tRNA(Thr) + AMP + diphosphate + H(+). In terms of biological role, catalyzes the attachment of threonine to tRNA(Thr) in a two-step reaction: L-threonine is first activated by ATP to form Thr-AMP and then transferred to the acceptor end of tRNA(Thr). Also edits incorrectly charged L-seryl-tRNA(Thr). The polypeptide is Threonine--tRNA ligase (Sphingopyxis alaskensis (strain DSM 13593 / LMG 18877 / RB2256) (Sphingomonas alaskensis)).